The sequence spans 30 residues: Kappa-sparatoxin-Hv1d (30 aa).

3 cysteine pairs are disulfide-bonded: Cys3–Cys17, Cys10–Cys22, and Cys16–Cys26.

As to expression, expressed by the venom gland.

The protein localises to the secreted. Functionally, inhibitor of voltage-gated potassium channels of the Kv4/KCND family. Blocks calcium channels (Cav). This is Kappa-sparatoxin-Hv1d from Heteropoda venatoria (Brown huntsman spider).